We begin with the raw amino-acid sequence, 525 residues long: MMRWFLLIGLASAAATDSSASFESRCQHFHKEIHLQNVHVHSTTYVPIGSNISMAYNPPICGGTSSSSISTIEFCQVALNVTTSDKSQFFMEAWLPSNYTGRFLSTGNGGLNGCVGYGDMIYASQYGFATIGTNNGHFGDTGQYFLNNPEVIEDFAYRALHTGTVVGKALTKLFYPQGYKNSYYLGCSTGGRQGWKSIQRFPDDFDGVVAGAPAFNFVNLCNWGSRFLKITGPPDSDTFVTSAQWSIIHNEIIRQCDALDGAVDGTIEDTDLCQPIFETLICNSTAVNKTSCLTGVQANTVNEVFSAMYGLDGKWLYPRMQPGSELAASFIYYSGNGFKYSDDWFKYVVYNDSNWDHSTWTLADAAAADAQDPFQISTFDGDISGFQKAGGKVLHYHGLEDAIITSDSSKAYYKHVADTMGLSPSDLDQFYRFFPISGMGHCSPGTGAASIGQGSSTYAGDDPQDNVLMAMVQWVEKGIAPEYVRGSKKSIDGQTEYRRKHCKYPKRNRYVGPGKYTDENAWKCV.

Residues 1 to 20 (MMRWFLLIGLASAAATDSSA) form the signal peptide. 6 disulfide bridges follow: Cys-26-Cys-75, Cys-61-Cys-114, Cys-187-Cys-442, Cys-256-Cys-273, Cys-282-Cys-292, and Cys-502-Cys-524. N-linked (GlcNAc...) asparagine glycosylation is found at Asn-51, Asn-80, and Asn-98. Ser-188 serves as the catalytic Acyl-ester intermediate. The Ca(2+) site is built by Asp-257, Asp-260, Ala-262, and Asp-264. Residues Asn-283, Asn-288, and Asn-351 are each glycosylated (N-linked (GlcNAc...) asparagine). Catalysis depends on charge relay system residues Asp-401 and His-441.

This sequence belongs to the tannase family.

It is found in the secreted. The enzyme catalyses feruloyl-polysaccharide + H2O = ferulate + polysaccharide.. Involved in degradation of plant cell walls. Hydrolyzes the feruloyl-arabinose ester bond in arabinoxylans as well as the feruloyl-galactose and feruloyl-arabinose ester bonds in pectin. The chain is Probable feruloyl esterase B-1 (faeB-1) from Neosartorya fischeri (strain ATCC 1020 / DSM 3700 / CBS 544.65 / FGSC A1164 / JCM 1740 / NRRL 181 / WB 181) (Aspergillus fischerianus).